Consider the following 173-residue polypeptide: Flavodoxin 2 (173 aa).

Positions 3 to 165 (MGLFYGSSTC…RIQTWCEQIL (163 aa)) constitute a Flavodoxin-like domain.

This sequence belongs to the flavodoxin family. FMN is required as a cofactor.

Low-potential electron donor to a number of redox enzymes. The chain is Flavodoxin 2 (fldB) from Salmonella typhi.